Here is a 199-residue protein sequence, read N- to C-terminus: V-type ATP synthase subunit E (199 aa).

The protein belongs to the V-ATPase E subunit family.

Functionally, produces ATP from ADP in the presence of a proton gradient across the membrane. This Borrelia garinii subsp. bavariensis (strain ATCC BAA-2496 / DSM 23469 / PBi) (Borreliella bavariensis) protein is V-type ATP synthase subunit E.